The following is a 238-amino-acid chain: Uridylate kinase (238 aa).

ATP is bound at residue Lys12–Gly15. Residues Gly20–Gly25 form an involved in allosteric activation by GTP region. Gly54 contacts UMP. 2 residues coordinate ATP: Gly55 and Arg59. Residues Asp72 and Thr133–Thr140 contribute to the UMP site. ATP contacts are provided by Tyr166 and Asp169.

It belongs to the UMP kinase family. Homohexamer.

The protein resides in the cytoplasm. It catalyses the reaction UMP + ATP = UDP + ADP. It functions in the pathway pyrimidine metabolism; CTP biosynthesis via de novo pathway; UDP from UMP (UMPK route): step 1/1. With respect to regulation, allosterically activated by GTP. Inhibited by UTP. Catalyzes the reversible phosphorylation of UMP to UDP. This chain is Uridylate kinase, found in Clostridium botulinum (strain Langeland / NCTC 10281 / Type F).